The following is a 411-amino-acid chain: Glutamate dehydrogenase 2, mitochondrial (411 aa).

The N-terminal 18 residues, 1-18, are a transit peptide targeting the mitochondrion; the sequence is MNALAATSRNFRQAARLL. The active site involves K102.

Belongs to the Glu/Leu/Phe/Val dehydrogenases family. Expressed in roots. Expressed ubiquitously in various tissues.

It is found in the mitochondrion. It catalyses the reaction L-glutamate + NAD(+) + H2O = 2-oxoglutarate + NH4(+) + NADH + H(+). The enzyme catalyses L-glutamate + NADP(+) + H2O = 2-oxoglutarate + NH4(+) + NADPH + H(+). The protein is Glutamate dehydrogenase 2, mitochondrial (GDH2) of Oryza sativa subsp. japonica (Rice).